The following is a 388-amino-acid chain: MSEQIVTPDTAALTVPNKDAKINLLDLNRQQMREFFKNMGEKPFRADQVMKWMYHYCCDDFDEMTDINKVLRSKLKEVAEIRAPEVVEEQRSTDGTIKWAIAVGDQRVETVYIPEEDRATLCVSSQVGCALECKFCSTAQQGFNRNLRVSEIIGQVWRAAKIVGAVKTTGVRPITNVVMMGMGEPLLNLNNVVPAMEIMLDDFGFGLSKRRVTLSTSGVVPALDKLGDMIDVALAISLHAPNDTIRDEIVPINKKYNIETFLNSVRGYISKSNANQGRVTIEYVMLDHVNDGTEHAHELAALLKDTPCKINLIPWNPFPGAPYGRSSNSRIDRFSKVLMEYGFTTIVRKTRGDDIDAACGQLAGDVIDRTKRTLRKRMQGEAIDVKAV.

E109 functions as the Proton acceptor in the catalytic mechanism. Residues 115 to 354 (EEDRATLCVS…TIVRKTRGDD (240 aa)) form the Radical SAM core domain. C122 and C359 are disulfide-bonded. [4Fe-4S] cluster-binding residues include C129, C133, and C136. Residues 183-184 (GE), S215, 237-239 (SLH), and N316 contribute to the S-adenosyl-L-methionine site. Residue C359 is the S-methylcysteine intermediate of the active site.

The protein belongs to the radical SAM superfamily. RlmN family. It depends on [4Fe-4S] cluster as a cofactor.

It is found in the cytoplasm. It catalyses the reaction adenosine(2503) in 23S rRNA + 2 reduced [2Fe-2S]-[ferredoxin] + 2 S-adenosyl-L-methionine = 2-methyladenosine(2503) in 23S rRNA + 5'-deoxyadenosine + L-methionine + 2 oxidized [2Fe-2S]-[ferredoxin] + S-adenosyl-L-homocysteine. The enzyme catalyses adenosine(37) in tRNA + 2 reduced [2Fe-2S]-[ferredoxin] + 2 S-adenosyl-L-methionine = 2-methyladenosine(37) in tRNA + 5'-deoxyadenosine + L-methionine + 2 oxidized [2Fe-2S]-[ferredoxin] + S-adenosyl-L-homocysteine. In terms of biological role, specifically methylates position 2 of adenine 2503 in 23S rRNA and position 2 of adenine 37 in tRNAs. m2A2503 modification seems to play a crucial role in the proofreading step occurring at the peptidyl transferase center and thus would serve to optimize ribosomal fidelity. The polypeptide is Dual-specificity RNA methyltransferase RlmN (Klebsiella pneumoniae subsp. pneumoniae (strain ATCC 700721 / MGH 78578)).